Reading from the N-terminus, the 115-residue chain is Ribonuclease P protein component (115 aa).

The protein belongs to the RnpA family. In terms of assembly, consists of a catalytic RNA component (M1 or rnpB) and a protein subunit.

The enzyme catalyses Endonucleolytic cleavage of RNA, removing 5'-extranucleotides from tRNA precursor.. Functionally, RNaseP catalyzes the removal of the 5'-leader sequence from pre-tRNA to produce the mature 5'-terminus. It can also cleave other RNA substrates such as 4.5S RNA. The protein component plays an auxiliary but essential role in vivo by binding to the 5'-leader sequence and broadening the substrate specificity of the ribozyme. The polypeptide is Ribonuclease P protein component (Bacillus cereus (strain G9842)).